A 428-amino-acid polypeptide reads, in one-letter code: Tyrosine--tRNA ligase (428 aa).

Tyr-36 is a binding site for L-tyrosine. A 'HIGH' region motif is present at residues 41 to 50; the sequence is PTARSLHIGS. Positions 169 and 173 each coordinate L-tyrosine. The 'KMSKS' region motif lies at 229-233; the sequence is KMGKT. Lys-232 lines the ATP pocket. The S4 RNA-binding domain maps to 361–427; the sequence is IPAYEIMHEC…GKKKYMIIKV (67 aa).

Belongs to the class-I aminoacyl-tRNA synthetase family. TyrS type 1 subfamily. As to quaternary structure, homodimer.

It localises to the cytoplasm. It catalyses the reaction tRNA(Tyr) + L-tyrosine + ATP = L-tyrosyl-tRNA(Tyr) + AMP + diphosphate + H(+). In terms of biological role, catalyzes the attachment of tyrosine to tRNA(Tyr) in a two-step reaction: tyrosine is first activated by ATP to form Tyr-AMP and then transferred to the acceptor end of tRNA(Tyr). The polypeptide is Tyrosine--tRNA ligase (Syntrophus aciditrophicus (strain SB)).